Reading from the N-terminus, the 120-residue chain is UPF0231 protein KPN78578_01240 (120 aa).

It belongs to the UPF0231 family.

The protein is UPF0231 protein KPN78578_01240 of Klebsiella pneumoniae subsp. pneumoniae (strain ATCC 700721 / MGH 78578).